The following is a 199-amino-acid chain: Glycerol-3-phosphate acyltransferase (199 aa).

Transmembrane regions (helical) follow at residues Ala-3–Val-23, Trp-50–Val-70, Asp-78–Leu-98, Leu-113–Leu-133, and Leu-154–Phe-174.

Belongs to the PlsY family. Probably interacts with PlsX.

The protein localises to the cell inner membrane. It carries out the reaction an acyl phosphate + sn-glycerol 3-phosphate = a 1-acyl-sn-glycero-3-phosphate + phosphate. Its pathway is lipid metabolism; phospholipid metabolism. Functionally, catalyzes the transfer of an acyl group from acyl-phosphate (acyl-PO(4)) to glycerol-3-phosphate (G3P) to form lysophosphatidic acid (LPA). This enzyme utilizes acyl-phosphate as fatty acyl donor, but not acyl-CoA or acyl-ACP. The chain is Glycerol-3-phosphate acyltransferase from Thermus thermophilus (strain ATCC BAA-163 / DSM 7039 / HB27).